The sequence spans 254 residues: Hydroxyethylthiazole kinase (254 aa).

Residue methionine 40 coordinates substrate. Residues arginine 116 and serine 162 each contribute to the ATP site. Position 189 (glycine 189) interacts with substrate.

It belongs to the Thz kinase family. The cofactor is Mg(2+).

The catalysed reaction is 5-(2-hydroxyethyl)-4-methylthiazole + ATP = 4-methyl-5-(2-phosphooxyethyl)-thiazole + ADP + H(+). Its pathway is cofactor biosynthesis; thiamine diphosphate biosynthesis; 4-methyl-5-(2-phosphoethyl)-thiazole from 5-(2-hydroxyethyl)-4-methylthiazole: step 1/1. Catalyzes the phosphorylation of the hydroxyl group of 4-methyl-5-beta-hydroxyethylthiazole (THZ). The chain is Hydroxyethylthiazole kinase from Limosilactobacillus fermentum (strain NBRC 3956 / LMG 18251) (Lactobacillus fermentum).